Consider the following 147-residue polypeptide: Hemoglobin subunit beta (147 aa).

The Globin domain occupies 3-147 (HWTPEEKQYI…VAHALALGYH (145 aa)). Heme b contacts are provided by His64 and His93.

The protein belongs to the globin family. As to quaternary structure, heterotetramer of two alpha-D chains and two beta chains. Red blood cells.

Involved in oxygen transport from the lung to the various peripheral tissues. The protein is Hemoglobin subunit beta (HBB) of Chelonoidis niger (Galapagos giant tortoise).